The sequence spans 198 residues: Probable GTP-binding protein EngB (198 aa).

The EngB-type G domain occupies asparagine 22–threonine 195. GTP is bound by residues glycine 30–serine 37, glycine 57–leucine 61, aspartate 75–glycine 78, threonine 142–aspartate 145, and phenylalanine 174–serine 176. Residues serine 37 and threonine 59 each contribute to the Mg(2+) site.

Belongs to the TRAFAC class TrmE-Era-EngA-EngB-Septin-like GTPase superfamily. EngB GTPase family. Mg(2+) is required as a cofactor.

Functionally, necessary for normal cell division and for the maintenance of normal septation. This chain is Probable GTP-binding protein EngB, found in Clostridium beijerinckii (strain ATCC 51743 / NCIMB 8052) (Clostridium acetobutylicum).